The sequence spans 153 residues: D-erythrulose-4-phosphate isomerase 1 (153 aa).

The active-site Proton acceptor is the cysteine 69.

It belongs to the LacAB/RpiB family.

It catalyses the reaction D-erythrulose 4-phosphate = D-erythrose 4-phosphate. Its pathway is carbohydrate metabolism; erythritol degradation. It participates in carbohydrate metabolism; D-threitol degradation. Functionally, catalyzes the isomerization of D-erythrulose-4P to D-erythrose-4P. Involved in the degradation pathways of erythritol and D-threitol, that allow M.smegmatis to grow on these compounds as the sole carbon source. The protein is D-erythrulose-4-phosphate isomerase 1 of Mycolicibacterium smegmatis (strain ATCC 700084 / mc(2)155) (Mycobacterium smegmatis).